The sequence spans 171 residues: Large ribosomal subunit protein bL17 (171 aa).

Over residues 140-152 the composition is skewed to basic and acidic residues; sequence KREIQTKAREEKR. A disordered region spans residues 140–171; the sequence is KREIQTKAREEKRATRKSNSAPVNKETTSKKK. Positions 156–165 are enriched in polar residues; that stretch reads KSNSAPVNKE.

This sequence belongs to the bacterial ribosomal protein bL17 family. In terms of assembly, part of the 50S ribosomal subunit. Contacts protein L32.

The chain is Large ribosomal subunit protein bL17 from Leptospira interrogans serogroup Icterohaemorrhagiae serovar Lai (strain 56601).